We begin with the raw amino-acid sequence, 41 residues long: MKVRNSLKSLKNRHRDCRVIRRRGRTYVINKTNRRFKARQG.

Belongs to the bacterial ribosomal protein bL36 family.

In Erythrobacter litoralis (strain HTCC2594), this protein is Large ribosomal subunit protein bL36.